A 347-amino-acid polypeptide reads, in one-letter code: Very-long-chain 3-oxoacyl-CoA reductase (347 aa).

The helical transmembrane segment at 22–42 (LLWSIFGFGVLKATTLILRIM) threads the bilayer. NADP(+) contacts are provided by valine 68, aspartate 122, asparagine 149, tyrosine 223, lysine 227, valine 256, and serine 258. The active-site Proton donor is tyrosine 223. The active-site Lowers pKa of active site Tyr is lysine 227.

The protein belongs to the short-chain dehydrogenases/reductases (SDR) family.

The protein resides in the endoplasmic reticulum membrane. The catalysed reaction is a very-long-chain (3R)-3-hydroxyacyl-CoA + NADP(+) = a very-long-chain 3-oxoacyl-CoA + NADPH + H(+). The protein operates within lipid metabolism; fatty acid biosynthesis. In terms of biological role, component of the microsomal membrane bound fatty acid elongation system, which produces the 26-carbon very long-chain fatty acids (VLCFA) from palmitate. Catalyzes the reduction of the 3-ketoacyl-CoA intermediate that is formed in each cycle of fatty acid elongation. VLCFAs serve as precursors for ceramide and sphingolipids. This Vanderwaltozyma polyspora (strain ATCC 22028 / DSM 70294 / BCRC 21397 / CBS 2163 / NBRC 10782 / NRRL Y-8283 / UCD 57-17) (Kluyveromyces polysporus) protein is Very-long-chain 3-oxoacyl-CoA reductase.